A 90-amino-acid polypeptide reads, in one-letter code: U7-theraphotoxin-Hhn1l (90 aa).

The signal sequence occupies residues 1 to 19 (MKTAIFTVVLALAVFAVLS). The propeptide occupies 20–50 (FGWEANEKALSEEFTELIHEKEAASETEARE). Cystine bridges form between Cys-51–Cys-65, Cys-58–Cys-70, and Cys-64–Cys-81.

This sequence belongs to the neurotoxin 10 (Hwtx-1) family. 13 (Hntx-13) subfamily. As to expression, expressed by the venom gland.

The protein localises to the secreted. In terms of biological role, ion channel inhibitor. This Cyriopagopus hainanus (Chinese bird spider) protein is U7-theraphotoxin-Hhn1l.